The primary structure comprises 346 residues: Large ribosomal subunit protein uL3 (346 aa).

The disordered stretch occupies residues 324–346 (RPPKKKPPVERPQITYVSRESKQ).

Belongs to the universal ribosomal protein uL3 family. In terms of assembly, part of the 50S ribosomal subunit. Forms a cluster with proteins L14 and L24e.

In terms of biological role, one of the primary rRNA binding proteins, it binds directly near the 3'-end of the 23S rRNA, where it nucleates assembly of the 50S subunit. This is Large ribosomal subunit protein uL3 from Thermococcus kodakarensis (strain ATCC BAA-918 / JCM 12380 / KOD1) (Pyrococcus kodakaraensis (strain KOD1)).